A 446-amino-acid chain; its full sequence is Tubulin beta chain (446 aa).

Residues Q11, E69, S138, G142, T143, G144, N204, and N226 each contribute to the GTP site. Mg(2+) is bound at residue E69. Residues 423-446 (QQYQDAGVDEEEEEYEEEPLPEDE) are disordered. Residues 429–446 (GVDEEEEEYEEEPLPEDE) show a composition bias toward acidic residues.

The protein belongs to the tubulin family. In terms of assembly, dimer of alpha and beta chains. A typical microtubule is a hollow water-filled tube with an outer diameter of 25 nm and an inner diameter of 15 nM. Alpha-beta heterodimers associate head-to-tail to form protofilaments running lengthwise along the microtubule wall with the beta-tubulin subunit facing the microtubule plus end conferring a structural polarity. Microtubules usually have 13 protofilaments but different protofilament numbers can be found in some organisms and specialized cells. It depends on Mg(2+) as a cofactor.

The protein resides in the cytoplasm. It is found in the cytoskeleton. Tubulin is the major constituent of microtubules, a cylinder consisting of laterally associated linear protofilaments composed of alpha- and beta-tubulin heterodimers. Microtubules grow by the addition of GTP-tubulin dimers to the microtubule end, where a stabilizing cap forms. Below the cap, tubulin dimers are in GDP-bound state, owing to GTPase activity of alpha-tubulin. This Pestalotiopsis microspora protein is Tubulin beta chain (TUBB).